Here is a 410-residue protein sequence, read N- to C-terminus: Elongation factor Tu, chloroplastic (410 aa).

Residues 10–215 (KPHVNIGTIG…IVDEYIPTPQ (206 aa)) form the tr-type G domain. Residues 19–26 (GHVDHGKT) are G1. 19 to 26 (GHVDHGKT) is a GTP binding site. Thr-26 provides a ligand contact to Mg(2+). Residues 61-65 (GITIN) form a G2 region. The interval 82 to 85 (DCPG) is G3. GTP contacts are provided by residues 82 to 86 (DCPGH) and 137 to 140 (NKAD). Residues 137-140 (NKAD) are G4. The interval 175 to 177 (SAL) is G5.

This sequence belongs to the TRAFAC class translation factor GTPase superfamily. Classic translation factor GTPase family. EF-Tu/EF-1A subfamily.

It is found in the plastid. The protein localises to the chloroplast. It carries out the reaction GTP + H2O = GDP + phosphate + H(+). Functionally, GTP hydrolase that promotes the GTP-dependent binding of aminoacyl-tRNA to the A-site of ribosomes during protein biosynthesis. The polypeptide is Elongation factor Tu, chloroplastic (tufA) (Cyanidioschyzon merolae (strain NIES-3377 / 10D) (Unicellular red alga)).